Consider the following 574-residue polypeptide: Proline--tRNA ligase (574 aa).

It belongs to the class-II aminoacyl-tRNA synthetase family. ProS type 1 subfamily. Homodimer.

It is found in the cytoplasm. The catalysed reaction is tRNA(Pro) + L-proline + ATP = L-prolyl-tRNA(Pro) + AMP + diphosphate. Its function is as follows. Catalyzes the attachment of proline to tRNA(Pro) in a two-step reaction: proline is first activated by ATP to form Pro-AMP and then transferred to the acceptor end of tRNA(Pro). As ProRS can inadvertently accommodate and process non-cognate amino acids such as alanine and cysteine, to avoid such errors it has two additional distinct editing activities against alanine. One activity is designated as 'pretransfer' editing and involves the tRNA(Pro)-independent hydrolysis of activated Ala-AMP. The other activity is designated 'posttransfer' editing and involves deacylation of mischarged Ala-tRNA(Pro). The misacylated Cys-tRNA(Pro) is not edited by ProRS. In Fervidobacterium nodosum (strain ATCC 35602 / DSM 5306 / Rt17-B1), this protein is Proline--tRNA ligase.